The primary structure comprises 373 residues: StAR-related lipid transfer protein 7, mitochondrial (373 aa).

Residues 1–61 constitute a mitochondrion transit peptide; sequence MFPRRPPATL…YSESSRCALL (61 aa). A coiled-coil region spans residues 89–114; the sequence is DEERIQEEELQRSINEMKRLEEMSNI. Positions 115–330 constitute an START domain; the sequence is FQSSGVENYP…LHMATLKAKN (216 aa). 2 disordered regions span residues 118–141 and 347–373; these read SGVE…KDKE and SSEA…IEYA.

In terms of processing, proteolytically cleaved by PARL. As to expression, expressed in epithelial cells of airways, peripheral bronchioles and alveoli, as well as in the basal cell layer of the epidermis (at protein level).

The protein localises to the mitochondrion. In terms of biological role, may play a protective role in mucosal tissues by preventing exaggerated allergic responses. The chain is StAR-related lipid transfer protein 7, mitochondrial (Stard7) from Mus musculus (Mouse).